The following is a 247-amino-acid chain: Putative cyclin-T1-1 (247 aa).

This sequence belongs to the cyclin family. Cyclin T subfamily.

The sequence is that of Putative cyclin-T1-1 (CYCT1-1) from Arabidopsis thaliana (Mouse-ear cress).